A 150-amino-acid chain; its full sequence is Putative HTH-type transcriptional regulator HI_0379 (150 aa).

Residues 2-131 enclose the HTH rrf2-type domain; that stretch reads KLTSKGRYAV…NEITLAELVN (130 aa).

The polypeptide is Putative HTH-type transcriptional regulator HI_0379 (Haemophilus influenzae (strain ATCC 51907 / DSM 11121 / KW20 / Rd)).